The chain runs to 141 residues: MRIMGLDLGEKRIGIAFSDPMGWTAQGHSILQRKGLKKDLSYLQELCQEFQVEKIVLGLPLNMNGTMGPKALETQEFARALQEALKIPVDFWDERLSSKSAERVLLEADLSRKRRKELIDKIAAVHILQAYLDGGSLGKDY.

This sequence belongs to the YqgF nuclease family.

The protein localises to the cytoplasm. Its function is as follows. Could be a nuclease involved in processing of the 5'-end of pre-16S rRNA. The chain is Putative pre-16S rRNA nuclease from Syntrophomonas wolfei subsp. wolfei (strain DSM 2245B / Goettingen).